Reading from the N-terminus, the 370-residue chain is ADSPGLARPHAHFASAGADAAGGGSPVLLLRTTSCCLEDLRPELLEEVKDILIPEERLITHRSRVIGRGHFGSVYHGTYMDPLLGNLHCAVKSLHRITYLEEVEEFLREGILMKGFHHPQVLSLLGVCLPRHGLPLVVLPYMRHGDLRHFVRAQERSPTVKELIGFGLQVALGMEYLAQKKFVHRDLAARNCMLDETLTVKVADFGLARDVFGKEYYSIRQHRHAKLPVRWMALESLQTQKFTTKSDVWSFGVLMWELLTRGASPYPEVDPYDMARYLLRGRRLPQPQPCPDTLYGVMLSCWAPTPEERPSFSGLVCELERVLASLEGEHYINMAVTYVNLESGPPFPPAPRGQLPDSEDEEDEEEEVAE.

The region spanning 60–323 (THRSRVIGRG…GLVCELERVL (264 aa)) is the Protein kinase domain. Residues 66–74 (IGRGHFGSV) and Lys-92 each bind ATP. Asp-186 functions as the Proton acceptor in the catalytic mechanism. The residue at position 216 (Tyr-216) is a Phosphotyrosine; by autocatalysis. Positions 345–370 (PPFPPAPRGQLPDSEDEEDEEEEVAE) are disordered. A compositionally biased stretch (acidic residues) spans 357–370 (DSEDEEDEEEEVAE).

The protein belongs to the protein kinase superfamily. Tyr protein kinase family.

It catalyses the reaction L-tyrosyl-[protein] + ATP = O-phospho-L-tyrosyl-[protein] + ADP + H(+). This chain is Tyrosine-protein kinase transforming protein SEA (V-SEA), found in Galliformes.